The primary structure comprises 252 residues: Adenosine 5'-phosphosulfate reductase (252 aa).

[4Fe-4S] cluster-binding residues include C125, C126, C208, and C211. The tract at residues 219 to 252 (DGYSREGRWSDRDKTECGLHTSPEDEDGAHAAES) is disordered. A compositionally biased stretch (basic and acidic residues) spans 221-235 (YSREGRWSDRDKTEC). C235 serves as the catalytic Nucleophile; cysteine thiosulfonate intermediate.

It belongs to the PAPS reductase family. CysH subfamily. The cofactor is [4Fe-4S] cluster.

The protein resides in the cytoplasm. The catalysed reaction is [thioredoxin]-disulfide + sulfite + AMP + 2 H(+) = adenosine 5'-phosphosulfate + [thioredoxin]-dithiol. The protein operates within sulfur metabolism; hydrogen sulfide biosynthesis; sulfite from sulfate. Catalyzes the formation of sulfite from adenosine 5'-phosphosulfate (APS) using thioredoxin as an electron donor. The polypeptide is Adenosine 5'-phosphosulfate reductase (Salinibacter ruber (strain DSM 13855 / M31)).